The chain runs to 250 residues: Indole-3-glycerol phosphate synthase (250 aa).

The protein belongs to the TrpC family.

It carries out the reaction 1-(2-carboxyphenylamino)-1-deoxy-D-ribulose 5-phosphate + H(+) = (1S,2R)-1-C-(indol-3-yl)glycerol 3-phosphate + CO2 + H2O. It participates in amino-acid biosynthesis; L-tryptophan biosynthesis; L-tryptophan from chorismate: step 4/5. The chain is Indole-3-glycerol phosphate synthase from Picrophilus torridus (strain ATCC 700027 / DSM 9790 / JCM 10055 / NBRC 100828 / KAW 2/3).